A 623-amino-acid polypeptide reads, in one-letter code: MEDLSDVFDIYAICACCKVAPTSEGTKNEPFSPRTFRGLGNKGTLPWKCNSVDMKYFSSVTTYVDESKYEKLKWKRERYLRMEASQGGGDNTSGGDNTHGGDNADKLQNVVVMGRSSWESIPKQYKPLPNRINVVLSKTLTKEDVKEKVFIIDSIDDLLLLLKKLKYYKCFIIGGAQVYRECLSRNLIKQIYFTRINGAYPCDVFFPEFDESQFRVTSVSEVYNSKGTTLDFLVYSKVGGGVDGGASNGSTATALRRTAMRSTAMRRNVAPRTAAPPMGPHSRANGERAPPRARARRTTPRQRKTTSCTSALTTKWGRKTRSTCKILKFTTASRLMQHPEYQYLGIIYDIIMNGNKQGDRTGVGVMSNFGYMMKFNLSEYFPLLTTKKLFLRGIIEELLWFIRGETNGNTLLNKNVRIWEANGTREFLDNRKLFHREVNDLGPIYGFQWRHFGAEYTNMHDNYEDKGVDQLKNVIHLIKNEPTSRRIILCAWNVKDLDQMALPPCHILCQFYVFDGKLSCIMYQRSCDLGLGVPFNIASYSIFTHMIAQVCNLQPAQFIHILGNAHVYNNHVDSLKVQLNRIPYPFPTLKLNPEVKNIEDFTISDFTIENYVHHDKITMEMAA.

The DHFR domain maps to 9 to 237 (DIYAICACCK…TTLDFLVYSK (229 aa)). Position 13–14 (13–14 (IC)) interacts with substrate. Residues Ala15 and 38 to 44 (GLGNKGT) contribute to the NADP(+) site. Residue Asp53 coordinates substrate. A run of 3 repeats spans residues 88 to 91 (GGDN), 94 to 97 (GGDN), and 100 to 103 (GGDN). Positions 88–103 (GGDNTSGGDNTHGGDN) are 3 X 4 AA repeats of G-G-D-N. NADP(+) contacts are provided by residues 115 to 117 (RSS), 137 to 139 (SKT), and Asp153. Substrate is bound by residues Ile173, Tyr179, and Thr194. 174-181 (GGAQVYRE) contacts NADP(+). The tract at residues 263 to 309 (TAMRRNVAPRTAAPPMGPHSRANGERAPPRARARRTTPRQRKTTSCT) is disordered. Over residues 291-304 (PRARARRTTPRQRK) the composition is skewed to basic residues. The thymidylate synthase stretch occupies residues 337-623 (QHPEYQYLGI…HDKITMEMAA (287 aa)). Arg360 lines the dUMP pocket. Cys505 is a catalytic residue. DUMP is bound by residues His506, 524–528 (QRSCD), Asn536, and 566–568 (HVY).

The protein in the N-terminal section; belongs to the dihydrofolate reductase family. It in the C-terminal section; belongs to the thymidylate synthase family. Homodimer.

The enzyme catalyses (6S)-5,6,7,8-tetrahydrofolate + NADP(+) = 7,8-dihydrofolate + NADPH + H(+). The catalysed reaction is dUMP + (6R)-5,10-methylene-5,6,7,8-tetrahydrofolate = 7,8-dihydrofolate + dTMP. It functions in the pathway cofactor biosynthesis; tetrahydrofolate biosynthesis; 5,6,7,8-tetrahydrofolate from 7,8-dihydrofolate: step 1/1. Its function is as follows. Bifunctional enzyme. Involved in de novo dTMP biosynthesis. Key enzyme in folate metabolism. Catalyzes an essential reaction for de novo glycine and purine synthesis, DNA precursor synthesis, and for the conversion of dUMP to dTMP. In Plasmodium vivax, this protein is Bifunctional dihydrofolate reductase-thymidylate synthase.